We begin with the raw amino-acid sequence, 334 residues long: Ornithine carbamoyltransferase (334 aa).

Carbamoyl phosphate-binding positions include 56 to 59 (STRT), glutamine 83, arginine 107, and 134 to 137 (HPTQ). L-ornithine contacts are provided by residues asparagine 168, aspartate 232, and 236-237 (SM). Carbamoyl phosphate contacts are provided by residues 274-275 (CL) and arginine 320.

This sequence belongs to the aspartate/ornithine carbamoyltransferase superfamily. OTCase family.

The protein resides in the cytoplasm. The catalysed reaction is carbamoyl phosphate + L-ornithine = L-citrulline + phosphate + H(+). The protein operates within amino-acid biosynthesis; L-arginine biosynthesis; L-arginine from L-ornithine and carbamoyl phosphate: step 1/3. Reversibly catalyzes the transfer of the carbamoyl group from carbamoyl phosphate (CP) to the N(epsilon) atom of ornithine (ORN) to produce L-citrulline. The protein is Ornithine carbamoyltransferase of Escherichia coli O45:K1 (strain S88 / ExPEC).